Reading from the N-terminus, the 171-residue chain is Co-chaperone protein HscB (171 aa).

Residues 2 to 74 (DYFTLFGLPA…LTRAEYLLSL (73 aa)) form the J domain.

It belongs to the HscB family. As to quaternary structure, interacts with HscA and stimulates its ATPase activity. Interacts with IscU.

In terms of biological role, co-chaperone involved in the maturation of iron-sulfur cluster-containing proteins. Seems to help targeting proteins to be folded toward HscA. The chain is Co-chaperone protein HscB from Salmonella typhimurium (strain LT2 / SGSC1412 / ATCC 700720).